The primary structure comprises 304 residues: Sulfate adenylyltransferase subunit 2 1 (304 aa).

The protein belongs to the PAPS reductase family. CysD subfamily. As to quaternary structure, heterodimer composed of CysD, the smaller subunit, and CysN.

It carries out the reaction sulfate + ATP + H(+) = adenosine 5'-phosphosulfate + diphosphate. It functions in the pathway sulfur metabolism; hydrogen sulfide biosynthesis; sulfite from sulfate: step 1/3. Functionally, with CysN forms the ATP sulfurylase (ATPS) that catalyzes the adenylation of sulfate producing adenosine 5'-phosphosulfate (APS) and diphosphate, the first enzymatic step in sulfur assimilation pathway. APS synthesis involves the formation of a high-energy phosphoric-sulfuric acid anhydride bond driven by GTP hydrolysis by CysN coupled to ATP hydrolysis by CysD. This Marinobacter nauticus (strain ATCC 700491 / DSM 11845 / VT8) (Marinobacter aquaeolei) protein is Sulfate adenylyltransferase subunit 2 1.